The following is a 427-amino-acid chain: Glutamate-1-semialdehyde 2,1-aminomutase (427 aa).

Residue K265 is modified to N6-(pyridoxal phosphate)lysine.

Belongs to the class-III pyridoxal-phosphate-dependent aminotransferase family. HemL subfamily. In terms of assembly, homodimer. Requires pyridoxal 5'-phosphate as cofactor.

It is found in the cytoplasm. The enzyme catalyses (S)-4-amino-5-oxopentanoate = 5-aminolevulinate. Its pathway is porphyrin-containing compound metabolism; protoporphyrin-IX biosynthesis; 5-aminolevulinate from L-glutamyl-tRNA(Glu): step 2/2. This Stutzerimonas stutzeri (strain A1501) (Pseudomonas stutzeri) protein is Glutamate-1-semialdehyde 2,1-aminomutase.